A 349-amino-acid polypeptide reads, in one-letter code: 4-hydroxy-tetrahydrodipicolinate reductase 2, chloroplastic (349 aa).

Residues 1 to 53 (MAANGLMAASSVFLHRPVHPHFSFSSRTNQMVPLGFKGRVSFIGNVKRCFPVV) constitute a chloroplast transit peptide. Residues 81–86 (GCSGKM), 173–175 (GTT), and 196–199 (SPQM) each bind NAD(+). The Proton donor/acceptor role is filled by His232. Lys236 acts as the Proton donor in catalysis. Residue 241–242 (GT) participates in (S)-2,3,4,5-tetrahydrodipicolinate binding.

Belongs to the DapB family.

It localises to the plastid. It is found in the chloroplast. The enzyme catalyses (S)-2,3,4,5-tetrahydrodipicolinate + NAD(+) + H2O = (2S,4S)-4-hydroxy-2,3,4,5-tetrahydrodipicolinate + NADH + H(+). It catalyses the reaction (S)-2,3,4,5-tetrahydrodipicolinate + NADP(+) + H2O = (2S,4S)-4-hydroxy-2,3,4,5-tetrahydrodipicolinate + NADPH + H(+). It functions in the pathway amino-acid biosynthesis; L-lysine biosynthesis via DAP pathway; (S)-tetrahydrodipicolinate from L-aspartate: step 4/4. Its function is as follows. Catalyzes the conversion of 4-hydroxy-tetrahydrodipicolinate (HTPA) to tetrahydrodipicolinate. This is 4-hydroxy-tetrahydrodipicolinate reductase 2, chloroplastic (DAPB2) from Arabidopsis thaliana (Mouse-ear cress).